The sequence spans 541 residues: Glutamyl-tRNA(Gln) amidotransferase subunit A, chloroplastic/mitochondrial (541 aa).

Active-site charge relay system residues include lysine 121 and serine 196. Serine 220 (acyl-ester intermediate) is an active-site residue.

The protein belongs to the amidase family. GatA subfamily. In terms of assembly, subunit of the heterotrimeric GatCAB amidotransferase (AdT) complex, composed of A, B and C subunits.

The protein resides in the mitochondrion. The protein localises to the plastid. It is found in the chloroplast stroma. It catalyses the reaction L-glutamyl-tRNA(Gln) + L-glutamine + ATP + H2O = L-glutaminyl-tRNA(Gln) + L-glutamate + ADP + phosphate + H(+). Its function is as follows. Allows the formation of correctly charged Gln-tRNA(Gln) through the transamidation of misacylated Glu-tRNA(Gln) in chloroplasts and mitochondria. The reaction takes place in the presence of glutamine and ATP through an activated gamma-phospho-Glu-tRNA(Gln). The protein is Glutamyl-tRNA(Gln) amidotransferase subunit A, chloroplastic/mitochondrial of Sorghum bicolor (Sorghum).